We begin with the raw amino-acid sequence, 634 residues long: Phototropic-responsive NPH3 family protein NPY2 (634 aa).

In terms of domain architecture, BTB spans 29–97 (SDISVDVEGS…CYGMTVTLSA (69 aa)). Residues 207–488 (DWWVEDLCEL…VQVLFFEQVR (282 aa)) enclose the NPH3 domain. The residue at position 429 (tyrosine 429) is a Phosphotyrosine. 2 disordered regions span residues 492-517 (SSGSSTPDLPRGMGRELRSCGTYGSS) and 584-634 (QLQS…VSVS). Positions 588 to 602 (KGGGEKNNGGGGGGS) are enriched in gly residues. Over residues 619 to 634 (KTATPSRNLTRRVSVS) the composition is skewed to polar residues.

Belongs to the NPH3 family. Specifically expressed in the hypophysis and the root meristems in the embryos. Highly expressed in primary root tips and radicles.

Its subcellular location is the cell membrane. The protein localises to the cytoplasm. The protein resides in the cytosol. It functions in the pathway protein modification; protein ubiquitination. May act as a substrate-specific adapter of an E3 ubiquitin-protein ligase complex (CUL3-RBX1-BTB) which mediates the ubiquitination and subsequent proteasomal degradation of target proteins. Plays an essential role in auxin-mediated organogenesis and in root gravitropic responses through the control of PIN proteins (e.g. PIN1 and PIN2) polarity in the root tip endodermal cell layer and in shoot epidermis. Recruited to the plasma membrane by PINs (e.g. PIN1 and PIN2) and, in concert with AGC kinases-mediated (e.g. D6PK and PID) PINs phosphorylation, maintains their polarity through limiting lateral diffusion-based escape. The protein is Phototropic-responsive NPH3 family protein NPY2 of Arabidopsis thaliana (Mouse-ear cress).